A 141-amino-acid chain; its full sequence is Hemoglobin subunit alpha (141 aa).

The region spanning 1–141 (VLSSTDKSNV…VSTVLTSKYR (141 aa)) is the Globin domain. Ser3 is modified (phosphoserine). N6-succinyllysine occurs at positions 7 and 11. Lys16 bears the N6-acetyllysine; alternate mark. Lys16 is modified (N6-succinyllysine; alternate). Phosphotyrosine is present on Tyr24. A Phosphoserine modification is found at Ser35. N6-succinyllysine is present on Lys40. Residue His58 participates in O2 binding. A heme b-binding site is contributed by His87. Ser102 carries the post-translational modification Phosphoserine. Thr108 is modified (phosphothreonine). A phosphoserine mark is found at Ser124 and Ser131. Thr134 and Thr137 each carry phosphothreonine. The residue at position 138 (Ser138) is a Phosphoserine.

This sequence belongs to the globin family. As to quaternary structure, heterotetramer of two alpha chains and two beta chains. Red blood cells.

Functionally, involved in oxygen transport from the lung to the various peripheral tissues. In terms of biological role, hemopressin acts as an antagonist peptide of the cannabinoid receptor CNR1. Hemopressin-binding efficiently blocks cannabinoid receptor CNR1 and subsequent signaling. The sequence is that of Hemoglobin subunit alpha from Pteropus vampyrus (Large flying fox).